Reading from the N-terminus, the 496-residue chain is DNA-directed DNA/RNA polymerase mu (496 aa).

Residues 1 to 22 form a disordered region; the sequence is MLPKRRRVRAGSPHSAVASSTP. Serine 12 carries the post-translational modification Phosphoserine. Over residues 12–22 the composition is skewed to low complexity; it reads SPHSAVASSTP. Residues 23–122 form the BRCT domain; that stretch reads PSVVRFPDVA…QPVPEEGRHH (100 aa). Na(+) contacts are provided by threonine 241 and valine 243. The tract at residues 323–332 is involved in ssDNA binding; the sequence is RGKLQGHDVD. Residues aspartate 330, aspartate 332, and aspartate 420 each coordinate Mg(2+).

Belongs to the DNA polymerase type-X family. Mg(2+) is required as a cofactor.

The protein localises to the nucleus. The enzyme catalyses DNA(n) + a 2'-deoxyribonucleoside 5'-triphosphate = DNA(n+1) + diphosphate. In terms of biological role, gap-filling polymerase involved in repair of DNA double-strand breaks by non-homologous end joining (NHEJ). Participates in immunoglobulin (Ig) light chain gene rearrangement in V(D)J recombination. In Mus musculus (Mouse), this protein is DNA-directed DNA/RNA polymerase mu (Polm).